A 604-amino-acid polypeptide reads, in one-letter code: Inactive all-trans-retinol 13,14-reductase (604 aa).

An N-terminal signal peptide occupies residues 1–17 (MWWILLFLEWFVDWARG).

Belongs to the carotenoid/retinoid oxidoreductase family. CrtISO subfamily.

This is Inactive all-trans-retinol 13,14-reductase (retsatl) from Danio rerio (Zebrafish).